The primary structure comprises 219 residues: 2-hydroxy-3-keto-5-methylthiopentenyl-1-phosphate phosphatase (219 aa).

The protein belongs to the HAD-like hydrolase superfamily. MtnX family.

It carries out the reaction 2-hydroxy-5-methylsulfanyl-3-oxopent-1-enyl phosphate + H2O = 1,2-dihydroxy-5-(methylsulfanyl)pent-1-en-3-one + phosphate. It functions in the pathway amino-acid biosynthesis; L-methionine biosynthesis via salvage pathway; L-methionine from S-methyl-5-thio-alpha-D-ribose 1-phosphate: step 4/6. Functionally, dephosphorylates 2-hydroxy-3-keto-5-methylthiopentenyl-1-phosphate (HK-MTPenyl-1-P) yielding 1,2-dihydroxy-3-keto-5-methylthiopentene (DHK-MTPene). The polypeptide is 2-hydroxy-3-keto-5-methylthiopentenyl-1-phosphate phosphatase (Bacillus thuringiensis (strain Al Hakam)).